Here is a 307-residue protein sequence, read N- to C-terminus: Dioxygenase cdmD (307 aa).

Positions 146, 148, and 226 each coordinate Fe cation.

Belongs to the PhyH family. Homodimer. The cofactor is Fe cation.

It catalyses the reaction verruculide A + 2-oxoglutarate + O2 = chrodrimanin T + succinate + CO2. The enzyme catalyses chrodrimanin E + 2-oxoglutarate + O2 = chrodrimanin A + succinate + CO2. It functions in the pathway secondary metabolite biosynthesis; terpenoid biosynthesis. Dioxygenase; part of the gene cluster that mediates the biosynthesis of chrodrimanin B, a meroterpenoid that acts as a potent blocker of insect GABA-gated chloride channels. The first step of the pathway is the biosynthesis of 6-hydroxymellein by the polyketide synthase cdmE. The prenyltransferase cdmH acts as a 6-hydroxymellein 5-farnesyltransferase and produces the hydrophobic metabolite verruculide C. The FAD-dependent monooxygenase cdmI further converts verruculide C into verruculide B. The terpene cyclase cdmG then produced the pentacyclic molecule 3-hydroxypentacecilide A, the backbone structure of chrodrimanin B, via folding the farnesyl moiety of the substrate into the chair-boat conformation. The short-chain dehydrogenase/reductase cdmF functions as the 3-OH dehydrogenase that oxidizes the C-3 hydroxyl group of 3-hydroxypentacecilide A and produces chrodrimanin C, the dehydrogenated product of 3-hydroxypentacecilide A. The cytochrome P450 monooxygenase cdmJ then accepts both 3-hydroxypentacecilide A and chrodrimanin C and functions as a C-7-beta-hydroxylase to produce respectively chrodrimanin H and chrodrimanin F. The dioxygenase cdmA accepts chrodrimanin H to afford chrodrimanin E, which is further transformed to chrodrimanin A by the dioxygenase cdmD. CdmA can also accept chrodrimanin C as substrate to convert it into verruculide A, which is further converted into chrodrimanin T by cdmD. The last step of the biosynthesis is proposed to be performed by the acetyltransferase cdmC which acetylates chrodrimanin A to yield chrodrimanin B. The pathway may also lead to the production of additional shunt products, including chrodrimanins T and U. The chain is Dioxygenase cdmD from Talaromyces verruculosus (Penicillium verruculosum).